Consider the following 221-residue polypeptide: Protein-disulfide oxidoreductase DsbI (221 aa).

A helical membrane pass occupies residues 27-47 (FLWLLMAVAMGGLIILAHSFF). Residues C56 and C59 are joined by a disulfide bond. Helical transmembrane passes span 64–84 (FAMFVMVFGGLIAAINPKNII) and 85–105 (LKLIGCLAAFYGSIMGIKFSV). Cysteines 128 and 154 form a disulfide. A helical transmembrane segment spans residues 189 to 209 (LAFYEYGAGVPAGVWAMFCTV).

The protein belongs to the DsbB family. DsbI subfamily. In terms of assembly, interacts with DsbL.

The protein localises to the cell inner membrane. Its function is as follows. Required for disulfide bond formation in some proteins. Part of a redox system composed of DsbI and DsbL that mediates formation of an essential disulfide bond in AssT. The sequence is that of Protein-disulfide oxidoreductase DsbI from Lelliottia amnigena (Enterobacter amnigenus).